The sequence spans 122 residues: Large ribosomal subunit protein uL14 (122 aa).

Belongs to the universal ribosomal protein uL14 family. In terms of assembly, part of the 50S ribosomal subunit. Forms a cluster with proteins L3 and L19. In the 70S ribosome, L14 and L19 interact and together make contacts with the 16S rRNA in bridges B5 and B8.

Its function is as follows. Binds to 23S rRNA. Forms part of two intersubunit bridges in the 70S ribosome. This is Large ribosomal subunit protein uL14 from Salinispora tropica (strain ATCC BAA-916 / DSM 44818 / JCM 13857 / NBRC 105044 / CNB-440).